Reading from the N-terminus, the 178-residue chain is MSSNNDARKNQPLINDQIRFRTMVVIDDHGNNLGEMNRIDALNLAASKNLDLVVIAKKGNIPVTKILDYGKYKYEQKRRQKESRKNQTIIKVKEIKIKPMIGEHDLKVRAENAKRWLEDKDNVKFVIEARGRMCTKDEFIVQAYEKFIDLIKDYGTVVQANKKVSNYRYETIIEPIKK.

The protein belongs to the IF-3 family. As to quaternary structure, monomer.

The protein localises to the cytoplasm. Its function is as follows. IF-3 binds to the 30S ribosomal subunit and shifts the equilibrium between 70S ribosomes and their 50S and 30S subunits in favor of the free subunits, thus enhancing the availability of 30S subunits on which protein synthesis initiation begins. This Ureaplasma parvum serovar 3 (strain ATCC 700970) protein is Translation initiation factor IF-3.